Here is a 281-residue protein sequence, read N- to C-terminus: Fibrinogen-like protein 1-like protein (281 aa).

An N-terminal signal peptide occupies residues 1 to 33 (MGLQAGTRQLHGNLILLPVAVVMLLLCTSPVCA). The Fibrinogen C-terminal domain occupies 34 to 246 (TASVGLPADC…RPSSWSNPPM (213 aa)). Disulfide bonds link cysteine 43/cysteine 69 and cysteine 201/cysteine 213. Residues 260-269 (PSRSPSLPSP) are compositionally biased toward low complexity. A disordered region spans residues 260 to 281 (PSRSPSLPSPITATHTVRNQLQ). The segment covering 270–281 (ITATHTVRNQLQ) has biased composition (polar residues).

In terms of tissue distribution, expressed in smal intestine, colon and lung.

Its function is as follows. Shows a cytidine deaminase activity on 2'-deoxycytidine (in vitro), however shows no RNA editing activity (in vitro). This Gallus gallus (Chicken) protein is Fibrinogen-like protein 1-like protein.